Reading from the N-terminus, the 66-residue chain is Large ribosomal subunit protein uL29 (66 aa).

The protein belongs to the universal ribosomal protein uL29 family.

The protein is Large ribosomal subunit protein uL29 of Thermococcus onnurineus (strain NA1).